Consider the following 152-residue polypeptide: Phospholipase A2 GL16-1 (152 aa).

Positions 1–21 (MNPAHLLVLLAVCVSLLGAST) are cleaved as a signal peptide. Residues 22-27 (IPPLPL) constitute a propeptide that is removed on maturation. Disulfide bonds link C38/C104, C54/C151, C56/C72, C71/C132, C78/C125, C88/C118, and C111/C123. Ca(2+)-binding residues include Y55, G57, and G59. The active site involves H75. Residue D76 coordinates Ca(2+). D126 is an active-site residue.

Belongs to the phospholipase A2 family. Group I subfamily. It depends on Ca(2+) as a cofactor.

The protein resides in the secreted. The catalysed reaction is a 1,2-diacyl-sn-glycero-3-phosphocholine + H2O = a 1-acyl-sn-glycero-3-phosphocholine + a fatty acid + H(+). Functionally, PA2 catalyzes the calcium-dependent hydrolysis of the 2-acyl groups in 3-sn-phosphoglycerides. This is Phospholipase A2 GL16-1 from Laticauda semifasciata (Black-banded sea krait).